We begin with the raw amino-acid sequence, 250 residues long: uncharacterized protein (250 aa).

Positions 15, 17, 36, 56, 57, and 82 each coordinate NAD(+). Position 143 (Ser-143) interacts with substrate. NAD(+) contacts are provided by Tyr-156, Lys-160, Phe-189, and Thr-191. The Proton acceptor role is filled by Tyr-156.

Belongs to the short-chain dehydrogenases/reductases (SDR) family.

This is an uncharacterized protein from Mycobacterium tuberculosis (strain CDC 1551 / Oshkosh).